We begin with the raw amino-acid sequence, 68 residues long: MVYYPELLVWVSQEPFAYKEMEGGLIKGRLPVPKEVNRKKMEETGAASLTPPGSREFTSPATSYLHPF.

Residues 42 to 68 (EETGAASLTPPGSREFTSPATSYLHPF) form a disordered region.

Interacts with FLNA. Interacts with the latency-associated peptides (LAP) of TGFB1 and TGFB2; the interaction results in a decrease in TGFB autoinduction. Phosphorylated on Ser-59. Phosphorylation decreases stability and activity. Expressed in brain and fetal lung.

Its subcellular location is the cytoplasm. Functionally, may have roles in cellular differentiation. Ectopic expression induces differentiation of fibroblast into myofibroblast and myofibroblast ameboid migration. Increases retinoic-acid regulation of lipid-droplet biogenesis. May also have neural functions. Promotes axonal regeneration and augments motility of gliomas. Down-regulates the expression of TGFB1 and TGFB2 but not of TGFB3. May play a role in the regulation of alveolar generation. The protein is Neuronal regeneration-related protein (Nrep) of Mus musculus (Mouse).